Consider the following 292-residue polypeptide: Ribosomal RNA small subunit methyltransferase A (292 aa).

Positions 46, 48, 73, 94, 118, and 136 each coordinate S-adenosyl-L-methionine.

It belongs to the class I-like SAM-binding methyltransferase superfamily. rRNA adenine N(6)-methyltransferase family. RsmA subfamily.

Its subcellular location is the cytoplasm. The enzyme catalyses adenosine(1518)/adenosine(1519) in 16S rRNA + 4 S-adenosyl-L-methionine = N(6)-dimethyladenosine(1518)/N(6)-dimethyladenosine(1519) in 16S rRNA + 4 S-adenosyl-L-homocysteine + 4 H(+). In terms of biological role, specifically dimethylates two adjacent adenosines (A1518 and A1519) in the loop of a conserved hairpin near the 3'-end of 16S rRNA in the 30S particle. May play a critical role in biogenesis of 30S subunits. The protein is Ribosomal RNA small subunit methyltransferase A of Deinococcus radiodurans (strain ATCC 13939 / DSM 20539 / JCM 16871 / CCUG 27074 / LMG 4051 / NBRC 15346 / NCIMB 9279 / VKM B-1422 / R1).